A 70-amino-acid polypeptide reads, in one-letter code: Turripeptide Lol9.1 (70 aa).

A signal peptide spans 1–20 (MKVYCLLLVLLVGLVSQAHG). In terms of domain architecture, Kazal-like spans 21 to 70 (KPTKRCLSVCSAEYEPVCGSDGKTYANKCHLMTEACWSPTSITLVHEGKC). 3 disulfides stabilise this stretch: Cys26-Cys56, Cys30-Cys49, and Cys38-Cys70.

Belongs to the conopeptide P-like superfamily. As to expression, expressed by the venom duct.

The protein localises to the secreted. Its function is as follows. Acts as a neurotoxin by inhibiting an ion channel. May also act as a serine protease inhibitor, since it possess the kazal serine protease inhibitor signature. This chain is Turripeptide Lol9.1, found in Iotyrris olangoensis (Sea snail).